The following is a 427-amino-acid chain: Serine--tRNA ligase (427 aa).

230–232 contributes to the L-serine binding site; that stretch reads TAE. 261–263 lines the ATP pocket; the sequence is RAE. Glu-284 is an L-serine binding site. 348-351 contacts ATP; sequence EISS. Ser-384 provides a ligand contact to L-serine.

It belongs to the class-II aminoacyl-tRNA synthetase family. Type-1 seryl-tRNA synthetase subfamily. In terms of assembly, homodimer. The tRNA molecule binds across the dimer.

Its subcellular location is the cytoplasm. The catalysed reaction is tRNA(Ser) + L-serine + ATP = L-seryl-tRNA(Ser) + AMP + diphosphate + H(+). The enzyme catalyses tRNA(Sec) + L-serine + ATP = L-seryl-tRNA(Sec) + AMP + diphosphate + H(+). It functions in the pathway aminoacyl-tRNA biosynthesis; selenocysteinyl-tRNA(Sec) biosynthesis; L-seryl-tRNA(Sec) from L-serine and tRNA(Sec): step 1/1. Its function is as follows. Catalyzes the attachment of serine to tRNA(Ser). Is also able to aminoacylate tRNA(Sec) with serine, to form the misacylated tRNA L-seryl-tRNA(Sec), which will be further converted into selenocysteinyl-tRNA(Sec). The sequence is that of Serine--tRNA ligase from Syntrophomonas wolfei subsp. wolfei (strain DSM 2245B / Goettingen).